Consider the following 338-residue polypeptide: 1-aminocyclopropane-1-carboxylate deaminase (338 aa).

An N6-(pyridoxal phosphate)lysine modification is found at Lys-51. The Nucleophile role is filled by Ser-78.

It belongs to the ACC deaminase/D-cysteine desulfhydrase family. In terms of assembly, homotrimer. Requires pyridoxal 5'-phosphate as cofactor.

It catalyses the reaction 1-aminocyclopropane-1-carboxylate + H2O = 2-oxobutanoate + NH4(+). Functionally, catalyzes a cyclopropane ring-opening reaction, the irreversible conversion of 1-aminocyclopropane-1-carboxylate (ACC) to ammonia and alpha-ketobutyrate. Allows growth on ACC as a nitrogen source. The polypeptide is 1-aminocyclopropane-1-carboxylate deaminase (Burkholderia ambifaria (strain ATCC BAA-244 / DSM 16087 / CCUG 44356 / LMG 19182 / AMMD) (Burkholderia cepacia (strain AMMD))).